The chain runs to 222 residues: Interleukin-12 subunit alpha (222 aa).

The signal sequence occupies residues 1 to 25 (MCPPRGLLLVTILVLLSHLDHLTWA). 3 disulfides stabilise this stretch: Cys-40–Cys-113, Cys-67–Cys-199, and Cys-88–Cys-126. Residues Asn-42, Asn-96, and Asn-110 are each glycosylated (N-linked (GlcNAc...) asparagine).

The protein belongs to the IL-6 superfamily. In terms of assembly, heterodimer with IL12B; disulfide-linked. This heterodimer is known as interleukin IL-12. Heterodimer with EBI3/IL27B; not disulfide-linked. This heterodimer is known as interleukin IL-35. Interacts with NBR1; this interaction promotes IL-12 secretion.

The protein resides in the secreted. Functionally, heterodimerizes with IL12B to form the IL-12 cytokine or with EBI3/IL27B to form the IL-35 cytokine. IL-12 is primarily produced by professional antigen-presenting cells (APCs) such as B-cells and dendritic cells (DCs) as well as macrophages and granulocytes and regulates T-cell and natural killer-cell responses, induces the production of interferon-gamma (IFN-gamma), favors the differentiation of T-helper 1 (Th1) cells and is an important link between innate resistance and adaptive immunity. Mechanistically, exerts its biological effects through a receptor composed of IL12R1 and IL12R2 subunits. Binding to the receptor results in the rapid tyrosine phosphorylation of a number of cellular substrates including the JAK family kinases TYK2 and JAK2. In turn, recruited STAT4 gets phosphorylated and translocates to the nucleus where it regulates cytokine/growth factor responsive genes. As part of IL-35, plays essential roles in maintaining the immune homeostasis of the liver microenvironment and also functions as an immune-suppressive cytokine. Mediates biological events through unconventional receptors composed of IL12RB2 and gp130/IL6ST heterodimers or homodimers. Signaling requires the transcription factors STAT1 and STAT4, which form a unique heterodimer that binds to distinct DNA sites. This is Interleukin-12 subunit alpha (IL12A) from Canis lupus familiaris (Dog).